An 835-amino-acid chain; its full sequence is MKVLALRHSVAQVYADTQTYLHDDSKDEYENAFLISNLTTHNILYLNYSLKTLKILNKSGIAAVEVQSPDELFALIRCNFTYDYEDNIVYLHDYSYYTNNEIRTDQHWITKTDIIDYLLPGWKLTYVGYNGKNTRGHYNFSFICQNAATDDDIIIEYIYSNELDFQNFLLRKIKERMTTSLPIARLSNRVFRDKLFPSIVNIHKKVINVGPRNESMFTFLNFPTIKQFSNGAYIVKHTIKLKQEKWLGKRVSQFDIGQYKNMLNVVTTIYYYYNLYYSKPIIYMLGSAPSYWIYDIKQYSDFTFETWDPLDTPYSTTHHKELFFDKDVNKLKDNSVLYIDIRTDRGNMDWKEWRKIVEQQTVSNLNIAYKYLSTGKAKVCCVKLTAMDLELPITAKLLHHPTTEVRSEFYAILDVWDIITIKRFIPKGVFYAFINNVTTENVFIQPPFKLKTSPTDYIVALYALSNDLNSRQDVINLINKQKQSLITVRINNTFKDEPKVNFKNIYDWTFLPTDFELKDSIITSYDGCLGIFGLSISLSSKPTGNNHLFIINGTDKYDKLDQYANHMGVSRRSHQIRFSESATSYSGYIFRDLSNNNFNLIGTNVENSVSGHVYNALIYYRYNYAFDLKRWIYLHSIGKVAVEGGRYYEHAPIELIYACRSAKEFAILQDDLTVLRYANEIEGYINKVYSITYADDPNYFIGIKFNSIPYEYDVKIPHLTLGVLFISDNMIHDVITVLKKMKTELFKMEISTSYTYMLSDNTYVANASGVLSTYFKLYNMFYRNHITFGQSRMFIPHITLSFSNKQTVRIESTKLRINSIYLRKIKGETVFDMSE.

Positions 171-245 are N7-methyltransferase activity; that stretch reads RKIKERMTTS…KHTIKLKQEK (75 aa). The segment at 246 to 428 is 2'-O-methyltransferase activity; that stretch reads WLGKRVSQFD…ITIKRFIPKG (183 aa). Residues 429 to 555 form an N7-methyltransferase activity region; that stretch reads VFYAFINNVT…NHLFIINGTD (127 aa). A GTase/RTPase activity region spans residues 556 to 692; the sequence is KYDKLDQYAN…GYINKVYSIT (137 aa). Residues 693–835 are 2'-5'-phosphodiesterase activity; sequence YADDPNYFIG…KGETVFDMSE (143 aa). Active-site for 2'-5'-phosphodiesterase activity residues include H718, T720, H797, and T799.

It belongs to the rotavirus VP3 family. As to quaternary structure, interacts with VP1. Interacts with VP2.

It is found in the virion. It carries out the reaction a 5'-end diphospho-ribonucleoside in mRNA + GTP + H(+) = a 5'-end (5'-triphosphoguanosine)-ribonucleoside in mRNA + diphosphate. It catalyses the reaction a 5'-end (5'-triphosphoguanosine)-ribonucleoside in mRNA + S-adenosyl-L-methionine = a 5'-end (N(7)-methyl 5'-triphosphoguanosine)-ribonucleoside in mRNA + S-adenosyl-L-homocysteine. The enzyme catalyses 5'-triphosphoadenylyl-(2'-&gt;5')-adenylyl-(2'-&gt;5')-adenosine + 2 H2O = 2 AMP + ATP + 2 H(+). Its function is as follows. Multifunctional enzyme involved in mRNA capping. Catalyzes the formation of the 5' cap structure on the viral plus-strand transcripts. Specifically binds to GTP and displays guanylyltransferase and methyltransferase activities. Has affinity for ssRNA but not for dsRNA. Capping activity is non-specific and caps RNAs that initiate with either a G or an A residue. Together with VP1 polymerase, forms a VP1-VP3 complex positioned near the channels situated at each of the five-fold vertices of the core. Following infection, the outermost layer of the virus is lost, leaving a double-layered particle (DLP) made up of the core and VP6 shell. VP1 then catalyzes the transcription of fully conservative plus-strand genomic RNAs that are capped by VP3 and extruded through the DLP's channels into the cytoplasm where they function as mRNAs for translation of viral proteins. DLPs probably have an RNA triphosphatase activity as well, whereas open cores do not. Functionally, counteracts the host innate immune response thanks to its phosphodiesterase that degrades the 5'-triphosphorylated, 2'-5' linked adenylate oligomers produced by the host cell IFN-inducible 2',5'-oligoadenylate synthetase (OAS). The host RNaseL is therefore not activated. This chain is Protein VP3, found in Homo sapiens (Human).